The primary structure comprises 495 residues: Telomere-binding protein subunit alpha (495 aa).

The segment covering 1 to 13 has biased composition (polar residues); that stretch reads MSTAAKQNRSTSR. The tract at residues 1–31 is disordered; sequence MSTAAKQNRSTSRVSKKKTAAPKEGAAKKSD.

The protein belongs to the telombin family. In terms of assembly, heterodimer of an alpha and a beta subunit.

It is found in the nucleus. The protein resides in the chromosome. The protein localises to the telomere. May function as protective capping of the single-stranded telomeric overhang. May also participate in telomere length regulation during DNA replication. Binds specifically to the T4G4-containing extension on the 3'strand and protects this region of the telomere from nuclease digestion and chemical modification. The polypeptide is Telomere-binding protein subunit alpha (MAC-56A) (Sterkiella nova (Ciliate)).